Consider the following 247-residue polypeptide: Ribonuclease 3 (247 aa).

The 127-residue stretch at His-23–Gly-149 folds into the RNase III domain. Glu-62 is a Mg(2+) binding site. Asp-66 is a catalytic residue. Positions 135 and 138 each coordinate Mg(2+). Glu-138 is an active-site residue. In terms of domain architecture, DRBM spans Asp-176–Glu-244.

Belongs to the ribonuclease III family. Homodimer. Requires Mg(2+) as cofactor.

It is found in the cytoplasm. It catalyses the reaction Endonucleolytic cleavage to 5'-phosphomonoester.. Digests double-stranded RNA. Involved in the processing of primary rRNA transcript to yield the immediate precursors to the large and small rRNAs (23S and 16S). Processes some mRNAs, and tRNAs when they are encoded in the rRNA operon. Processes pre-crRNA and tracrRNA of type II CRISPR loci if present in the organism. The chain is Ribonuclease 3 from Corynebacterium efficiens (strain DSM 44549 / YS-314 / AJ 12310 / JCM 11189 / NBRC 100395).